Reading from the N-terminus, the 255-residue chain is Aspartate/glutamate leucyltransferase (255 aa).

It belongs to the R-transferase family. Bpt subfamily.

Its subcellular location is the cytoplasm. It carries out the reaction N-terminal L-glutamyl-[protein] + L-leucyl-tRNA(Leu) = N-terminal L-leucyl-L-glutamyl-[protein] + tRNA(Leu) + H(+). The catalysed reaction is N-terminal L-aspartyl-[protein] + L-leucyl-tRNA(Leu) = N-terminal L-leucyl-L-aspartyl-[protein] + tRNA(Leu) + H(+). Its function is as follows. Functions in the N-end rule pathway of protein degradation where it conjugates Leu from its aminoacyl-tRNA to the N-termini of proteins containing an N-terminal aspartate or glutamate. The polypeptide is Aspartate/glutamate leucyltransferase (Leptospira borgpetersenii serovar Hardjo-bovis (strain JB197)).